A 164-amino-acid polypeptide reads, in one-letter code: Endoribonuclease YbeY (164 aa).

Zn(2+) is bound by residues His-132, His-136, and His-142.

The protein belongs to the endoribonuclease YbeY family. Requires Zn(2+) as cofactor.

It is found in the cytoplasm. Functionally, single strand-specific metallo-endoribonuclease involved in late-stage 70S ribosome quality control and in maturation of the 3' terminus of the 16S rRNA. This Clostridium kluyveri (strain NBRC 12016) protein is Endoribonuclease YbeY.